The chain runs to 202 residues: Cold-regulated 413 plasma membrane protein 4 (202 aa).

Over 1–42 the chain is Extracellular; sequence MGRGEFLAMKTEENAANLINSDMNEFVAAAKKLVKDVGMLGG. The helical transmembrane segment at 43 to 63 threads the bilayer; that stretch reads VGFGTSVLQWAASIFAIYLLI. At 64–72 the chain is on the cytoplasmic side; the sequence is LDRTNWKTK. A helical membrane pass occupies residues 73–93; the sequence is MLTTLLVPYIFFTLPSVIFQF. The Extracellular portion of the chain corresponds to 94-97; the sequence is FSGD. Residues 98-118 form a helical membrane-spanning segment; that stretch reads FGKWIALIAIIVRLFFPKEFP. E119 is a topological domain (cytoplasmic). Residues 120–140 traverse the membrane as a helical segment; that stretch reads WLEIPVALILIVVVSPSLIAW. At 141–145 the chain is on the extracellular side; the sequence is TLRES. Residues 146–166 traverse the membrane as a helical segment; sequence WVGAVICLVIACYLFHEHIKA. At 167–181 the chain is on the cytoplasmic side; sequence SGGFKNSFTQKNGIS. The chain crosses the membrane as a helical span at residues 182–202; sequence NTIGIVALLVYPVWTIFFHIF.

This sequence belongs to the Cold-regulated 413 protein family.

It is found in the cell membrane. This chain is Cold-regulated 413 plasma membrane protein 4, found in Arabidopsis thaliana (Mouse-ear cress).